Consider the following 351-residue polypeptide: Ribosomal RNA large subunit methyltransferase M (351 aa).

S-adenosyl-L-methionine contacts are provided by residues Ser186, 219–222 (APGG), Asp238, Asp258, and Asp274. Catalysis depends on Lys303, which acts as the Proton acceptor.

This sequence belongs to the class I-like SAM-binding methyltransferase superfamily. RNA methyltransferase RlmE family. RlmM subfamily. In terms of assembly, monomer.

It localises to the cytoplasm. The enzyme catalyses cytidine(2498) in 23S rRNA + S-adenosyl-L-methionine = 2'-O-methylcytidine(2498) in 23S rRNA + S-adenosyl-L-homocysteine + H(+). In terms of biological role, catalyzes the 2'-O-methylation at nucleotide C2498 in 23S rRNA. The chain is Ribosomal RNA large subunit methyltransferase M from Xylella fastidiosa (strain 9a5c).